Here is a 372-residue protein sequence, read N- to C-terminus: MKYDLIIIGSGSVGAAAGYYATRAGLKVLMTDAHMPPHQQGSHHGDTRLIRHAYGEGEKYVPLVLRAQALWDELSTHNEEPIFVRSGVVNLGPADSAFLANVARSAQQWQLNVERLDATALMTRWPEIRVPDNYIGLFEADSGFLRSELAITTWLRLAREAGCAQLFNSPVSHIHHDDNGVTIETSEGCYHASKALISAGTWVKALVPELPVQPVRKVFAWFKADGRYSTKNRFPAFTGEMPNGDQYYGFPAENDELKIGKHNGGQLIQAQEERKPFAAVASDGAEAFPFLRNVLPGIGGCLHGAACTYDNSPDEDFIIDTLPGHENTLVITGLSGHGFKFAPVLGEIAADFALGKTPSFDLTPFRLSRFSQ.

4 to 34 (DLIIIGSGSVGAAAGYYATRAGLKVLMTDAH) serves as a coordination point for FAD. Position 307 is an S-8alpha-FAD cysteine (cysteine 307).

This sequence belongs to the MSOX/MTOX family. MTOX subfamily. Monomer. FAD serves as cofactor.

The catalysed reaction is N(alpha)-methyl-L-tryptophan + O2 + H2O = L-tryptophan + formaldehyde + H2O2. Its function is as follows. Catalyzes the oxidative demethylation of N-methyl-L-tryptophan. The polypeptide is N-methyl-L-tryptophan oxidase (Salmonella newport (strain SL254)).